Consider the following 158-residue polypeptide: SsrA-binding protein (158 aa).

Belongs to the SmpB family.

Its subcellular location is the cytoplasm. In terms of biological role, required for rescue of stalled ribosomes mediated by trans-translation. Binds to transfer-messenger RNA (tmRNA), required for stable association of tmRNA with ribosomes. tmRNA and SmpB together mimic tRNA shape, replacing the anticodon stem-loop with SmpB. tmRNA is encoded by the ssrA gene; the 2 termini fold to resemble tRNA(Ala) and it encodes a 'tag peptide', a short internal open reading frame. During trans-translation Ala-aminoacylated tmRNA acts like a tRNA, entering the A-site of stalled ribosomes, displacing the stalled mRNA. The ribosome then switches to translate the ORF on the tmRNA; the nascent peptide is terminated with the 'tag peptide' encoded by the tmRNA and targeted for degradation. The ribosome is freed to recommence translation, which seems to be the essential function of trans-translation. The sequence is that of SsrA-binding protein from Roseiflexus sp. (strain RS-1).